Consider the following 401-residue polypeptide: Phosphoglycerate kinase (401 aa).

Substrate is bound by residues 20–22 (DFN), arginine 35, 58–61 (HLGR), arginine 117, and arginine 154. ATP-binding positions include lysine 204, glycine 298, glutamate 329, and 358–361 (GGDS).

It belongs to the phosphoglycerate kinase family. Monomer.

The protein resides in the cytoplasm. The catalysed reaction is (2R)-3-phosphoglycerate + ATP = (2R)-3-phospho-glyceroyl phosphate + ADP. It participates in carbohydrate degradation; glycolysis; pyruvate from D-glyceraldehyde 3-phosphate: step 2/5. The polypeptide is Phosphoglycerate kinase (Bifidobacterium longum subsp. infantis (strain ATCC 15697 / DSM 20088 / JCM 1222 / NCTC 11817 / S12)).